Consider the following 159-residue polypeptide: Phosphopantetheine adenylyltransferase (159 aa).

T10 lines the substrate pocket. ATP-binding positions include 10 to 11 (TF) and H18. Residues K42, L74, and R88 each contribute to the substrate site. Residues 89 to 91 (GLR), E99, and 124 to 130 (NSFISST) each bind ATP.

It belongs to the bacterial CoaD family. In terms of assembly, homohexamer. It depends on Mg(2+) as a cofactor.

It localises to the cytoplasm. It catalyses the reaction (R)-4'-phosphopantetheine + ATP + H(+) = 3'-dephospho-CoA + diphosphate. The protein operates within cofactor biosynthesis; coenzyme A biosynthesis; CoA from (R)-pantothenate: step 4/5. Functionally, reversibly transfers an adenylyl group from ATP to 4'-phosphopantetheine, yielding dephospho-CoA (dPCoA) and pyrophosphate. The polypeptide is Phosphopantetheine adenylyltransferase (Shewanella pealeana (strain ATCC 700345 / ANG-SQ1)).